A 934-amino-acid polypeptide reads, in one-letter code: Rab GTPase-activating protein tbc-11 (934 aa).

Residues 16 to 134 form the PID domain; that stretch reads VQYLGCSQLV…SKAETAAKAL (119 aa). Positions 337–383 are disordered; that stretch reads FISLESDSDRKRSKQNLGKSPSRMPTQLLHPTGDDESDCDEPLLSGS. Positions 351-361 are enriched in polar residues; sequence QNLGKSPSRMP. Positions 422 to 612 constitute a Rab-GAP TBC domain; the sequence is GIPDKLRGRV…FILDLFLSQG (191 aa). Coiled coils occupy residues 727 to 800 and 861 to 895; these read KIEL…YKKL and LEEREDHIKNLEIDLAQTKLSLVEAECRNQDLTHQ.

In terms of biological role, rab GTPase activating protein for the small GTPases rab-6.1 and rab-6.2. Probably acts through rab-6.1 and rab-6.2 to play a role in microRNA-mediated gene silencing in different tissue types. Required for seam cell division and alae formation. In Caenorhabditis elegans, this protein is Rab GTPase-activating protein tbc-11.